Consider the following 500-residue polypeptide: Lysine--tRNA ligase (500 aa).

Mg(2+) is bound by residues glutamate 406 and glutamate 413.

The protein belongs to the class-II aminoacyl-tRNA synthetase family. As to quaternary structure, homodimer. Mg(2+) is required as a cofactor.

It localises to the cytoplasm. The enzyme catalyses tRNA(Lys) + L-lysine + ATP = L-lysyl-tRNA(Lys) + AMP + diphosphate. This Sulfolobus acidocaldarius (strain ATCC 33909 / DSM 639 / JCM 8929 / NBRC 15157 / NCIMB 11770) protein is Lysine--tRNA ligase.